Reading from the N-terminus, the 117-residue chain is Ig heavy chain V region MOO (117 aa).

An Ig-like domain is found at 1-116; the sequence is EVKLVESGGD…FGQGTIVTVS (116 aa).

In Canis lupus familiaris (Dog), this protein is Ig heavy chain V region MOO.